We begin with the raw amino-acid sequence, 274 residues long: Orotidine 5'-phosphate decarboxylase (274 aa).

Residue Lys-95 is the Proton donor of the active site.

The protein belongs to the OMP decarboxylase family. Type 2 subfamily.

It catalyses the reaction orotidine 5'-phosphate + H(+) = UMP + CO2. It participates in pyrimidine metabolism; UMP biosynthesis via de novo pathway; UMP from orotate: step 2/2. This Mycolicibacterium paratuberculosis (strain ATCC BAA-968 / K-10) (Mycobacterium paratuberculosis) protein is Orotidine 5'-phosphate decarboxylase.